The sequence spans 223 residues: RNA polymerase sigma-H factor (223 aa).

The short motif at 67-80 (DIVQEGMIGLYKSI) is the Polymerase core binding element. Residues 187–206 (YQEISEELNRHVKSIDNALQ) constitute a DNA-binding region (H-T-H motif).

The protein belongs to the sigma-70 factor family.

Sigma factors are initiation factors that promote the attachment of RNA polymerase to specific initiation sites and are then released. This sigma factor is involved in the transition to post-exponential phase in the beginning of sporulation. The protein is RNA polymerase sigma-H factor (sigH) of Bacillus licheniformis.